The chain runs to 489 residues: Protein nucleotidyltransferase YdiU (489 aa).

Residues glycine 88, glycine 90, arginine 91, lysine 111, aspartate 123, glycine 124, arginine 174, and arginine 181 each coordinate ATP. Aspartate 250 (proton acceptor) is an active-site residue. Residues asparagine 251 and aspartate 260 each contribute to the Mg(2+) site. Position 260 (aspartate 260) interacts with ATP.

It belongs to the SELO family. Mg(2+) is required as a cofactor. Mn(2+) serves as cofactor.

It catalyses the reaction L-seryl-[protein] + ATP = 3-O-(5'-adenylyl)-L-seryl-[protein] + diphosphate. The catalysed reaction is L-threonyl-[protein] + ATP = 3-O-(5'-adenylyl)-L-threonyl-[protein] + diphosphate. It carries out the reaction L-tyrosyl-[protein] + ATP = O-(5'-adenylyl)-L-tyrosyl-[protein] + diphosphate. The enzyme catalyses L-histidyl-[protein] + UTP = N(tele)-(5'-uridylyl)-L-histidyl-[protein] + diphosphate. It catalyses the reaction L-seryl-[protein] + UTP = O-(5'-uridylyl)-L-seryl-[protein] + diphosphate. The catalysed reaction is L-tyrosyl-[protein] + UTP = O-(5'-uridylyl)-L-tyrosyl-[protein] + diphosphate. Functionally, nucleotidyltransferase involved in the post-translational modification of proteins. It can catalyze the addition of adenosine monophosphate (AMP) or uridine monophosphate (UMP) to a protein, resulting in modifications known as AMPylation and UMPylation. This is Protein nucleotidyltransferase YdiU from Vibrio parahaemolyticus serotype O3:K6 (strain RIMD 2210633).